A 61-amino-acid polypeptide reads, in one-letter code: Small ribosomal subunit protein uS14 (61 aa).

Zn(2+) is bound by residues cysteine 24, cysteine 27, cysteine 40, and cysteine 43.

Belongs to the universal ribosomal protein uS14 family. Zinc-binding uS14 subfamily. As to quaternary structure, part of the 30S ribosomal subunit. Contacts proteins S3 and S10. Zn(2+) serves as cofactor.

Functionally, binds 16S rRNA, required for the assembly of 30S particles and may also be responsible for determining the conformation of the 16S rRNA at the A site. The polypeptide is Small ribosomal subunit protein uS14 (Pelobacter propionicus (strain DSM 2379 / NBRC 103807 / OttBd1)).